A 190-amino-acid chain; its full sequence is MSHADEHAGDHGATRRDFLYYATAGAGTVAAGAAAWTLVNQMNPSADVQALASIQVDVSGVETGTQLTVKWLGKPVFIRRRTEDEIQAGREVDLGQLIDRSAQNSNKPDAPATDENRTMDEAGEWLVMIGVCTHLGCVPIGDGAGDFGGWFCPCHGSHYDTSGRIRRGPAPQNLHIPVAEFLDDTTIKLG.

A helical transmembrane segment spans residues 18-39; it reads FLYYATAGAGTVAAGAAAWTLV. The region spanning 95–188 is the Rieske domain; the sequence is GQLIDRSAQN…AEFLDDTTIK (94 aa). Residues C132, H134, C152, and H155 each coordinate [2Fe-2S] cluster. An intrachain disulfide couples C137 to C154.

The protein belongs to the Rieske iron-sulfur protein family. As to quaternary structure, the main subunits of complex b-c1 are: cytochrome b, cytochrome c1 and the Rieske protein. [2Fe-2S] cluster is required as a cofactor.

The protein localises to the cell membrane. The catalysed reaction is a quinol + 2 Fe(III)-[cytochrome c](out) = a quinone + 2 Fe(II)-[cytochrome c](out) + 2 H(+)(out). Its function is as follows. Component of the ubiquinol-cytochrome c reductase complex (complex III or cytochrome b-c1 complex), which is a respiratory chain that generates an electrochemical potential coupled to ATP synthesis. The chain is Ubiquinol-cytochrome c reductase iron-sulfur subunit (petA) from Paracoccus denitrificans.